Reading from the N-terminus, the 366-residue chain is Homer protein homolog 1 (366 aa).

At G2 the chain carries N-acetylglycine. The 109-residue stretch at 2–110 (GEQPIFSTRA…EKFQEFKEAA (109 aa)) folds into the WH1 domain. A disordered region spans residues 114-189 (KEKSQEKMEL…RTQALSHASS (76 aa)). 2 stretches are compositionally biased toward polar residues: residues 138–147 (SPLTPESING) and 155–170 (DVTQ…TQNA). Residues 193-364 (KHWEAELATL…LRDNLAKLLE (172 aa)) are a coiled coil. The segment at 302-366 (KLQEVEIRNK…DNLAKLLECS (65 aa)) is required for tetramerization. A Phosphoserine modification is found at S318.

The protein belongs to the Homer family. In terms of assembly, tetramer; this tetrameric structure is critical for forming the high-order complex with SHANK1, which in turn is necessary for the structural and functional integrity of dendritic spines. Isoform 1, isoform 2 and isoform 3 encode a coiled-coil structure that mediates homo- and heteromultimerization. Interacts with GRM1, GRM5, ITPR1, DNM3, RYR1, RYR2 and SHANK3. Interacts with IFT57 and OPHN1. Interacts with SHANK1; forms high-order polymerized complex with a mesh-like network structure, at least composed of SHANK1, HOMER1 and DLGAP1; the complex formation is SHANK1 multimerization dependent. Interacts with NFATC4. Interacts with DAGLA (via PPXXF motif); this interaction is required for the cell membrane localization of DAGLA. Interacts with SRGAP2. In terms of tissue distribution, expressed in skeletal muscle at the level of the Z line, in the forebrain and cerebellum. As to expression, expressed in cardiac and skeletal muscle. Expressed in the hippocampus. In terms of tissue distribution, expressed in skeletal muscle at the level of the Z line, in the heart, forebrain and cerebellum.

It localises to the cytoplasm. Its subcellular location is the postsynaptic density. It is found in the synapse. The protein localises to the cell projection. The protein resides in the dendritic spine. Functionally, postsynaptic density scaffolding protein. Binds and cross-links cytoplasmic regions of GRM1, GRM5, ITPR1, DNM3, RYR1, RYR2, SHANK1 and SHANK3. By physically linking GRM1 and GRM5 with ER-associated ITPR1 receptors, it aids the coupling of surface receptors to intracellular calcium release. May also couple GRM1 to PI3 kinase through its interaction with AGAP2. Isoform 1 regulates the trafficking and surface expression of GRM5. Differentially regulates the functions of the calcium activated channel ryanodine receptors RYR1 and RYR2. Isoform 1 decreases the activity of RYR2, and increases the activity of RYR1, whereas isoform 5 counteracts the effects by competing for binding sites. Isoform 3 regulates the trafficking and surface expression of GRM5. Isoform 5 acts as a natural dominant negative, in dynamic competition with constitutively expressed isoform 1, isoform 2 and isoform 3 to regulate synaptic metabotropic glutamate function. Isoform 5, may be involved in the structural changes that occur at synapses during long-lasting neuronal plasticity and development. Forms a high-order complex with SHANK1, which in turn is necessary for the structural and functional integrity of dendritic spines. Negatively regulates T cell activation by inhibiting the calcineurin-NFAT pathway. Acts by competing with calcineurin/PPP3CA for NFAT protein binding, hence preventing NFAT activation by PPP3CA. The sequence is that of Homer protein homolog 1 from Mus musculus (Mouse).